The primary structure comprises 447 residues: NADP-specific glutamate dehydrogenase (447 aa).

Residues Lys-92, Gln-113, and Lys-116 each contribute to the substrate site. Catalysis depends on Lys-128, which acts as the Proton donor. A substrate-binding site is contributed by Gly-167. Residues Thr-211 and Asn-242 each contribute to the NADP(+) site. Residue Ser-380 coordinates substrate.

Belongs to the Glu/Leu/Phe/Val dehydrogenases family. As to quaternary structure, homohexamer.

The catalysed reaction is L-glutamate + NADP(+) + H2O = 2-oxoglutarate + NH4(+) + NADPH + H(+). Competitively inhibited by homoserine and by glutamine. Catalyzes the reversible oxidative deamination of glutamate to alpha-ketoglutarate and ammonia. This is NADP-specific glutamate dehydrogenase from Escherichia coli (strain K12).